The primary structure comprises 390 residues: O-glycoside alpha-1,2-mannosyltransferase omh1 (390 aa).

The Nucleophile role is filled by Glu279.

Belongs to the glycosyltransferase 15 family.

It is found in the endoplasmic reticulum. Its subcellular location is the golgi apparatus. Mannosyltransferase involved in O-glycosylation of cell wall and secreted proteins. Plays a major role in extending alpha-1,2-linked mannose in the O-glycan pathway. The protein is O-glycoside alpha-1,2-mannosyltransferase omh1 (omh1) of Schizosaccharomyces pombe (strain 972 / ATCC 24843) (Fission yeast).